Here is a 315-residue protein sequence, read N- to C-terminus: MQNRLTIKDIARLSGVGKSTVSRVLNNESGVSERTRERVEAVMNQHGFSPSRSARAMRGQSDKVVAIIVTRLDSLSENLAVQTMLPAFYEQGYDPIMMESQFSPTLVMEHLGMLRRRNIDGVVLFGFTGITEELIAPWKASLVLLARDAQGFASVCYDDEGAIHILMQRLYEQGHRNISFLGVPHSDITTGKRRHDAYLAFCKKHKLHPVAALPGLAMKQGYEHTASVIMPDTTALVCATDTLALGASKYLQEQRIETLQLASVGNTPLIKFLHPEIVTVDPGYAEAGRQAASQLIEQINGRCDPRRIVIPSTLA.

The HTH lacI-type domain maps to 5-59 (LTIKDIARLSGVGKSTVSRVLNNESGVSERTRERVEAVMNQHGFSPSRSARAMRG). A DNA-binding region (H-T-H motif) is located at residues 7-26 (IKDIARLSGVGKSTVSRVLN). Residues 71 to 77 (RLDSLSE), glycine 126, arginine 147, 187 to 190 (DITT), arginine 194, threonine 242, and tyrosine 284 contribute to the alpha,alpha-trehalose 6-phosphate site.

Homodimer.

In terms of biological role, repressor of the treBC operon. It is able to bind trehalose-6-phosphate. This chain is HTH-type transcriptional regulator TreR (treR), found in Salmonella typhimurium (strain LT2 / SGSC1412 / ATCC 700720).